A 47-amino-acid polypeptide reads, in one-letter code: Large ribosomal subunit protein bL34 (47 aa).

It belongs to the bacterial ribosomal protein bL34 family.

The polypeptide is Large ribosomal subunit protein bL34 (Mycobacterium tuberculosis (strain ATCC 25177 / H37Ra)).